A 365-amino-acid polypeptide reads, in one-letter code: Putative 2-dehydropantoate 2-reductase (365 aa).

Belongs to the ketopantoate reductase family.

The catalysed reaction is (R)-pantoate + NADP(+) = 2-dehydropantoate + NADPH + H(+). Its pathway is cofactor biosynthesis; (R)-pantothenate biosynthesis; (R)-pantoate from 3-methyl-2-oxobutanoate: step 2/2. Functionally, catalyzes the NADPH-dependent reduction of ketopantoate into pantoic acid. This Arabidopsis thaliana (Mouse-ear cress) protein is Putative 2-dehydropantoate 2-reductase (KPR).